We begin with the raw amino-acid sequence, 571 residues long: 2-succinyl-5-enolpyruvyl-6-hydroxy-3-cyclohexene-1-carboxylate synthase (571 aa).

It belongs to the TPP enzyme family. MenD subfamily. Homodimer. The cofactor is Mg(2+). Mn(2+) is required as a cofactor. Requires thiamine diphosphate as cofactor.

The enzyme catalyses isochorismate + 2-oxoglutarate + H(+) = 5-enolpyruvoyl-6-hydroxy-2-succinyl-cyclohex-3-ene-1-carboxylate + CO2. It participates in quinol/quinone metabolism; 1,4-dihydroxy-2-naphthoate biosynthesis; 1,4-dihydroxy-2-naphthoate from chorismate: step 2/7. The protein operates within quinol/quinone metabolism; menaquinone biosynthesis. Catalyzes the thiamine diphosphate-dependent decarboxylation of 2-oxoglutarate and the subsequent addition of the resulting succinic semialdehyde-thiamine pyrophosphate anion to isochorismate to yield 2-succinyl-5-enolpyruvyl-6-hydroxy-3-cyclohexene-1-carboxylate (SEPHCHC). The protein is 2-succinyl-5-enolpyruvyl-6-hydroxy-3-cyclohexene-1-carboxylate synthase of Lysinibacillus sphaericus (strain C3-41).